Reading from the N-terminus, the 395-residue chain is Elongation factor Tu (395 aa).

The 195-residue stretch at 10 to 204 folds into the tr-type G domain; the sequence is KPHVNIGTIG…TVDSYIPEPK (195 aa). Residues 19–26 form a G1 region; that stretch reads GHVDHGKT. 19 to 26 is a GTP binding site; sequence GHVDHGKT. Threonine 26 contacts Mg(2+). Residues 60–64 form a G2 region; the sequence is GITIN. The G3 stretch occupies residues 81 to 84; the sequence is DAPG. GTP is bound by residues 81–85 and 136–139; these read DAPGH and NKTD. The segment at 136-139 is G4; it reads NKTD. The segment at 174–176 is G5; it reads SAL.

This sequence belongs to the TRAFAC class translation factor GTPase superfamily. Classic translation factor GTPase family. EF-Tu/EF-1A subfamily. Monomer.

It localises to the cytoplasm. The catalysed reaction is GTP + H2O = GDP + phosphate + H(+). Functionally, GTP hydrolase that promotes the GTP-dependent binding of aminoacyl-tRNA to the A-site of ribosomes during protein biosynthesis. The sequence is that of Elongation factor Tu from Leuconostoc citreum (strain KM20).